The chain runs to 438 residues: Serine hydroxymethyltransferase (438 aa).

(6S)-5,6,7,8-tetrahydrofolate-binding positions include Leu133 and 137-139 (GHL). An N6-(pyridoxal phosphate)lysine modification is found at Lys242.

The protein belongs to the SHMT family. In terms of assembly, homodimer. The cofactor is pyridoxal 5'-phosphate.

The protein localises to the cytoplasm. It catalyses the reaction (6R)-5,10-methylene-5,6,7,8-tetrahydrofolate + glycine + H2O = (6S)-5,6,7,8-tetrahydrofolate + L-serine. It participates in one-carbon metabolism; tetrahydrofolate interconversion. The protein operates within amino-acid biosynthesis; glycine biosynthesis; glycine from L-serine: step 1/1. Functionally, catalyzes the reversible interconversion of serine and glycine with tetrahydrofolate (THF) serving as the one-carbon carrier. This reaction serves as the major source of one-carbon groups required for the biosynthesis of purines, thymidylate, methionine, and other important biomolecules. Also exhibits THF-independent aldolase activity toward beta-hydroxyamino acids, producing glycine and aldehydes, via a retro-aldol mechanism. This is Serine hydroxymethyltransferase from Brucella canis (strain ATCC 23365 / NCTC 10854 / RM-666).